We begin with the raw amino-acid sequence, 327 residues long: tRNA uridine(34) hydroxylase (327 aa).

Residues 142–240 (DDPDTLVIDT…YLEQVPEAES (99 aa)) enclose the Rhodanese domain. Cysteine 200 serves as the catalytic Cysteine persulfide intermediate.

Belongs to the TrhO family.

The catalysed reaction is uridine(34) in tRNA + AH2 + O2 = 5-hydroxyuridine(34) in tRNA + A + H2O. In terms of biological role, catalyzes oxygen-dependent 5-hydroxyuridine (ho5U) modification at position 34 in tRNAs. In Synechococcus sp. (strain CC9605), this protein is tRNA uridine(34) hydroxylase.